The sequence spans 213 residues: Uracil phosphoribosyltransferase (213 aa).

5-phospho-alpha-D-ribose 1-diphosphate contacts are provided by residues arginine 78, arginine 103, and 130-138; that span reads DPMLATGGT. Residues isoleucine 197 and 202 to 204 each bind uracil; that span reads GDA. A 5-phospho-alpha-D-ribose 1-diphosphate-binding site is contributed by aspartate 203.

This sequence belongs to the UPRTase family. It depends on Mg(2+) as a cofactor.

It catalyses the reaction UMP + diphosphate = 5-phospho-alpha-D-ribose 1-diphosphate + uracil. The protein operates within pyrimidine metabolism; UMP biosynthesis via salvage pathway; UMP from uracil: step 1/1. With respect to regulation, allosterically activated by GTP. Functionally, catalyzes the conversion of uracil and 5-phospho-alpha-D-ribose 1-diphosphate (PRPP) to UMP and diphosphate. This Nocardioides sp. (strain ATCC BAA-499 / JS614) protein is Uracil phosphoribosyltransferase.